Here is a 90-residue protein sequence, read N- to C-terminus: Serine protease inhibitor kazal-like protein, minor form (90 aa).

Residues 1-23 (MSSTWIKFLFILTLVLLPYSVFS) form the signal peptide. The region spanning 33–89 (VIKEPNCTMYKSKSECSNIAENPVCADDRNTYYNECYFCIEKVVEKLKYRYHGICIY) is the Kazal-like domain. Asn38 carries N-linked (GlcNAc...) asparagine glycosylation.

As to expression, luminal fluid and mucosal folds of the seminal vesicles (at protein level). Not detected in brain, heart, lung, liver, kidney, stomach, small intestine, muscle, skin, thymus, placenta or bladder.

The protein resides in the secreted. In terms of biological role, does not function as an inhibitor of trypsin, chymotrypsin, subtilisin or elastase. Binds sperm and enhances sperm motility. May act as a decapacitation factor, suppresses BSA-stimulated sperm capacitation and blocks sperm-oocyte interactions in vitro. This is Serine protease inhibitor kazal-like protein, minor form (Spinkl) from Mus musculus (Mouse).